A 264-amino-acid chain; its full sequence is MSKVTSSTLLKYKQEGRKFTALTAYDASFASAFDGEGIDVLLVGDSLGMVLQGHDDTLPVTTADIAYHTRCVRRGIERSLLIADMPFMSYATPEQAMENATTLMQAGANMVKLEGGHWLLETVTKLTERGIPVCAHLGLTPQSVNVFGGFKVQGRDAENAQRIIDEAKALEAAGAQLLVVECIPASLATAITQALTIPVIGIGAGATTDGQILVMHDVLGISSGYIPRFSKNYLKQTGEIRSAVRAYIEEVANGSFPSAEHTFN.

Mg(2+)-binding residues include Asp45 and Asp84. Residues 45–46, Asp84, and Lys112 contribute to the 3-methyl-2-oxobutanoate site; that span reads DS. Glu114 contributes to the Mg(2+) binding site. The active-site Proton acceptor is the Glu181.

It belongs to the PanB family. Homodecamer; pentamer of dimers. Requires Mg(2+) as cofactor.

Its subcellular location is the cytoplasm. The enzyme catalyses 3-methyl-2-oxobutanoate + (6R)-5,10-methylene-5,6,7,8-tetrahydrofolate + H2O = 2-dehydropantoate + (6S)-5,6,7,8-tetrahydrofolate. It functions in the pathway cofactor biosynthesis; (R)-pantothenate biosynthesis; (R)-pantoate from 3-methyl-2-oxobutanoate: step 1/2. Catalyzes the reversible reaction in which hydroxymethyl group from 5,10-methylenetetrahydrofolate is transferred onto alpha-ketoisovalerate to form ketopantoate. This is 3-methyl-2-oxobutanoate hydroxymethyltransferase from Shewanella oneidensis (strain ATCC 700550 / JCM 31522 / CIP 106686 / LMG 19005 / NCIMB 14063 / MR-1).